The following is a 107-amino-acid chain: Protein Rev (107 aa).

Ser5 carries the post-translational modification Phosphoserine; by host CK2. The segment at 18–26 (AIKILYQSN) is homomultimerization. 2 disordered regions span residues 24–48 (QSNP…WRAR) and 82–107 (HLDC…VGRS). Residues 34 to 50 (TRQARRNRRRRWRARQR) carry the Nuclear localization signal and RNA-binding (RRE) motif. The span at 36 to 48 (QARRNRRRRWRAR) shows a compositional bias: basic residues. The short motif at 73–84 (LQLPPLERLHLD) is the Nuclear export signal and binding to XPO1 element. Polar residues predominate over residues 88–101 (DSGTSGTQQPQGTE). Phosphoserine; by host is present on Ser92.

Belongs to the HIV-1 REV protein family. Homomultimer; when bound to the RRE. Multimeric assembly is essential for activity and may involve XPO1. Binds to human KPNB1, XPO1, TNPO1, RANBP5 and IPO7. Interacts with the viral Integrase. Interacts with human KHDRBS1. Interacts with human NAP1; this interaction decreases Rev multimerization and stimulates its activity. Interacts with human DEAD-box helicases DDX3 and DDX24; these interactions may serve for viral RNA export to the cytoplasm and packaging, respectively. Interacts with human PSIP1; this interaction may inhibit HIV-1 DNA integration by promoting dissociation of the Integrase-LEDGF/p75 complex. Asymmetrically arginine dimethylated at one site by host PRMT6. Methylation impairs the RNA-binding activity and export of viral RNA from the nucleus to the cytoplasm. Post-translationally, phosphorylated by protein kinase CK2. Presence of, and maybe binding to the N-terminus of the regulatory beta subunit of CK2 is necessary for CK2-mediated Rev's phosphorylation.

The protein resides in the host nucleus. It is found in the host nucleolus. It localises to the host cytoplasm. In terms of biological role, escorts unspliced or incompletely spliced viral pre-mRNAs (late transcripts) out of the nucleus of infected cells. These pre-mRNAs carry a recognition sequence called Rev responsive element (RRE) located in the env gene, that is not present in fully spliced viral mRNAs (early transcripts). This function is essential since most viral proteins are translated from unspliced or partially spliced pre-mRNAs which cannot exit the nucleus by the pathway used by fully processed cellular mRNAs. Rev itself is translated from a fully spliced mRNA that readily exits the nucleus. Rev's nuclear localization signal (NLS) binds directly to KPNB1/Importin beta-1 without previous binding to KPNA1/Importin alpha-1. KPNB1 binds to the GDP bound form of RAN (Ran-GDP) and targets Rev to the nucleus. In the nucleus, the conversion from Ran-GDP to Ran-GTP dissociates Rev from KPNB1 and allows Rev's binding to the RRE in viral pre-mRNAs. Rev multimerization on the RRE via cooperative assembly exposes its nuclear export signal (NES) to the surface. Rev can then form a complex with XPO1/CRM1 and Ran-GTP, leading to nuclear export of the complex. Conversion from Ran-GTP to Ran-GDP mediates dissociation of the Rev/RRE/XPO1/RAN complex, so that Rev can return to the nucleus for a subsequent round of export. Beside KPNB1, also seems to interact with TNPO1/Transportin-1, RANBP5/IPO5 and IPO7/RANBP7 for nuclear import. The nucleoporin-like HRB/RIP is an essential cofactor that probably indirectly interacts with Rev to release HIV RNAs from the perinuclear region to the cytoplasm. This chain is Protein Rev, found in Human immunodeficiency virus type 1 group M subtype G (isolate SE6165) (HIV-1).